We begin with the raw amino-acid sequence, 186 residues long: GPI-anchored hemophore ARB_02741 (186 aa).

The signal sequence occupies residues 1–18; sequence MKFSQAVIALAAATVVSA. In terms of domain architecture, CFEM spans 19-108; sequence QLPDVPQCSL…SSKPSEPSTS (90 aa). Disulfide bonds link Cys-26–Cys-67, Cys-30–Cys-62, Cys-40–Cys-48, and Cys-50–Cys-83. Asp-45 lines the heme pocket. The tract at residues 89–159 is disordered; that stretch reads PVSIPPVEES…NTGVPTQSTP (71 aa). Low complexity predominate over residues 96-131; that stretch reads EESSSKPSEPSTSEAPTASPTESTPAPTTPAPTGTG. Positions 132–144 are enriched in gly residues; it reads SPSGTGAPGGPSG. The span at 148–159 shows a compositional bias: polar residues; the sequence is FTNTGVPTQSTP. Gly-163 is lipidated: GPI-anchor amidated glycine. A propeptide spans 164-186 (removed in mature form); sequence AASGLSANIGGMGAAILAIAAYL.

This sequence belongs to the RBT5 family. The GPI-anchor is attached to the protein in the endoplasmic reticulum and serves to target the protein to the cell surface. There, the glucosamine-inositol phospholipid moiety is cleaved off and the GPI-modified mannoprotein is covalently attached via its lipidless GPI glycan remnant to the 1,6-beta-glucan of the outer cell wall layer.

It localises to the secreted. The protein localises to the cell wall. The protein resides in the cell membrane. Functionally, GPI-anchored cell wall protein involved in stabilizing the cell wall. This chain is GPI-anchored hemophore ARB_02741, found in Arthroderma benhamiae (strain ATCC MYA-4681 / CBS 112371) (Trichophyton mentagrophytes).